A 312-amino-acid chain; its full sequence is DNA primase small subunit PriS (312 aa).

Catalysis depends on residues D88, D90, and D215.

This sequence belongs to the eukaryotic-type primase small subunit family. As to quaternary structure, heterodimer of a small subunit (PriS) and a large subunit (PriL). Mg(2+) is required as a cofactor. Requires Mn(2+) as cofactor.

In terms of biological role, catalytic subunit of DNA primase, an RNA polymerase that catalyzes the synthesis of short RNA molecules used as primers for DNA polymerase during DNA replication. The small subunit contains the primase catalytic core and has DNA synthesis activity on its own. Binding to the large subunit stabilizes and modulates the activity, increasing the rate of DNA synthesis while decreasing the length of the DNA fragments, and conferring RNA synthesis capability. The DNA polymerase activity may enable DNA primase to also catalyze primer extension after primer synthesis. May also play a role in DNA repair. The protein is DNA primase small subunit PriS of Pyrobaculum aerophilum (strain ATCC 51768 / DSM 7523 / JCM 9630 / CIP 104966 / NBRC 100827 / IM2).